Here is a 271-residue protein sequence, read N- to C-terminus: D-methionine-binding lipoprotein MetQ (271 aa).

The first 22 residues, 1-22, serve as a signal peptide directing secretion; it reads MAFKFKTFAAVGALIGSLALAG. The N-palmitoyl cysteine moiety is linked to residue Cys23. Cys23 carries S-diacylglycerol cysteine lipidation.

Belongs to the NlpA lipoprotein family.

The protein localises to the cell membrane. This protein is a component of a D-methionine permease, a binding protein-dependent, ATP-driven transport system. This Salmonella typhi protein is D-methionine-binding lipoprotein MetQ (metQ).